Consider the following 510-residue polypeptide: Beta-glucosidase 12 (510 aa).

The first 24 residues, 1–24, serve as a signal peptide directing secretion; that stretch reads MAAAGAMPGGLLLTFLLLAVVASG. An a beta-D-glucoside-binding site is contributed by Q53. Residue N122 is glycosylated (N-linked (GlcNAc...) asparagine). Residues H157 and 202 to 203 contribute to the a beta-D-glucoside site; that span reads NE. E203 serves as the catalytic Proton donor. Disulfide bonds link C208–C243 and C222–C230. Residue N229 is glycosylated (N-linked (GlcNAc...) asparagine). Position 346 (Y346) interacts with a beta-D-glucoside. N361 and N371 each carry an N-linked (GlcNAc...) asparagine glycan. E417 lines the a beta-D-glucoside pocket. The Nucleophile role is filled by E417. N425 carries an N-linked (GlcNAc...) asparagine glycan. A beta-D-glucoside is bound by residues W466, 473 to 474, and F482; that span reads EW.

It belongs to the glycosyl hydrolase 1 family.

Its subcellular location is the secreted. The enzyme catalyses Hydrolysis of terminal, non-reducing beta-D-glucosyl residues with release of beta-D-glucose.. Its function is as follows. Hydrolyzes p-nitrophenyl beta-D-glucoside, p-nitrophenyl beta-D-galactoside, p-nitrophenyl beta-D-xyloside, p-nitrophenyl beta-D-fucoside, p-nitrophenyl beta-L-arabinoside, cello-oligosaccharides and laminaribiose. The protein is Beta-glucosidase 12 of Oryza sativa subsp. indica (Rice).